Reading from the N-terminus, the 304-residue chain is Porphobilinogen deaminase (304 aa).

Cysteine 240 carries the post-translational modification S-(dipyrrolylmethanemethyl)cysteine.

It belongs to the HMBS family. As to quaternary structure, monomer. It depends on dipyrromethane as a cofactor.

The catalysed reaction is 4 porphobilinogen + H2O = hydroxymethylbilane + 4 NH4(+). It participates in porphyrin-containing compound metabolism; protoporphyrin-IX biosynthesis; coproporphyrinogen-III from 5-aminolevulinate: step 2/4. Functionally, tetrapolymerization of the monopyrrole PBG into the hydroxymethylbilane pre-uroporphyrinogen in several discrete steps. This Xanthomonas oryzae pv. oryzae (strain MAFF 311018) protein is Porphobilinogen deaminase.